Consider the following 91-residue polypeptide: Small ribosomal subunit protein bS16 (91 aa).

This sequence belongs to the bacterial ribosomal protein bS16 family. As to quaternary structure, part of the 30S ribosomal subunit.

Its function is as follows. Binds to the lower part of the body of the 30S subunit, where it stabilizes two of its domains. The polypeptide is Small ribosomal subunit protein bS16 (Thermus thermophilus).